A 492-amino-acid polypeptide reads, in one-letter code: Catalase isozyme C (492 aa).

Arg62 is a binding site for heme. His65 is an active-site residue. Position 102 (Arg102) interacts with heme. Asn138 is a catalytic residue. Phe151 lines the heme pocket. Tyr210 carries the phosphotyrosine; by STRK1 modification. Positions 325 to 348 (CPGIIVPGIYYSDDKLLQTRIFSY) form a cross-link, 3-(S-cysteinyl)-tyrosine (Cys-Tyr). Heme is bound by residues Arg344, Tyr348, and Arg355. A Peroxisome targeting signal motif is present at residues 484-492 (SRLSAKPSM).

This sequence belongs to the catalase family. As to quaternary structure, homotetramer. Interacts with GLO1 and GLO4; these interactions are disturbed by alpha-hydroxy-2-pyridinemethanesulfonic acid (HPMS) and salicylic acid (SA). Interacts with STRK1 at the plasma membrane. Heme serves as cofactor. Activated by STRK1-mediated phosphorylation at Tyr-210 upon salt and oxidative stress. In terms of tissue distribution, highly expressed in mature leaves. Mainly expressed in leaf blades, stems, panicles, leaf sheaths, and culms, but barely in roots.

The protein localises to the peroxisome. It is found in the glyoxysome. It localises to the cell membrane. The catalysed reaction is 2 H2O2 = O2 + 2 H2O. Strongly inhibited by beta-mercaptoethanol, sodium azide and potassium cyanide. Slightly repressed by 3-amino-1,2,4-triazole (3-AT). Activity is repressed proportionally to increased concentration of NaCl, KCl, LiCl and MgCl(2). Occurs in almost all aerobically respiring organisms and serves to protect cells from the toxic effects of hydrogen peroxide. Responsible for the redox homeostasis in leaves. Prevents nitric oxide (NO) accumulation and subsequent NO-mediated leaf cell death as well as the S-nitrosylation of specific proteins (e.g. glyceraldehyde 3-phosphate dehydrogenase and thioredoxin) by degrading H(2)O(2). Involved in photorespiration. Promotes drought stress tolerance and recovery. Involved in NO-mediated enhanced tolerance to zinc oxide nanoparticles (ZnO NPs)-induced phytotoxicity. Participates in melatonin-mediated detoxification. In Oryza sativa subsp. japonica (Rice), this protein is Catalase isozyme C.